The chain runs to 354 residues: Small ribosomal subunit protein uS2 (354 aa).

It belongs to the universal ribosomal protein uS2 family.

The chain is Small ribosomal subunit protein uS2 from Methylorubrum populi (strain ATCC BAA-705 / NCIMB 13946 / BJ001) (Methylobacterium populi).